The chain runs to 381 residues: Dihydroorotate dehydrogenase (quinone) (381 aa).

FMN is bound by residues 74-78 and threonine 98; that span reads AGFDK. Lysine 78 serves as a coordination point for substrate. Substrate is bound at residue 123–127; the sequence is NRMGF. FMN is bound by residues asparagine 152 and asparagine 185. Asparagine 185 contacts substrate. Catalysis depends on serine 188, which acts as the Nucleophile. Residue asparagine 190 participates in substrate binding. Residues lysine 223 and threonine 251 each contribute to the FMN site. 252-253 is a substrate binding site; the sequence is NT. FMN-binding positions include glycine 289, glycine 318, and 339–340; that span reads YT. Positions 359–381 are disordered; sequence RSSPPSPDVTLPPENTPVGQIQA.

It belongs to the dihydroorotate dehydrogenase family. Type 2 subfamily. Monomer. It depends on FMN as a cofactor.

It localises to the cell membrane. It catalyses the reaction (S)-dihydroorotate + a quinone = orotate + a quinol. Its pathway is pyrimidine metabolism; UMP biosynthesis via de novo pathway; orotate from (S)-dihydroorotate (quinone route): step 1/1. Catalyzes the conversion of dihydroorotate to orotate with quinone as electron acceptor. The chain is Dihydroorotate dehydrogenase (quinone) from Synechococcus sp. (strain JA-2-3B'a(2-13)) (Cyanobacteria bacterium Yellowstone B-Prime).